Here is a 181-residue protein sequence, read N- to C-terminus: NADH-quinone oxidoreductase subunit I (181 aa).

2 consecutive 4Fe-4S ferredoxin-type domains span residues Leu44–Ala74 and Arg90–Asp119. [4Fe-4S] cluster contacts are provided by Cys54, Cys57, Cys60, Cys64, Cys99, Cys102, Cys105, and Cys109.

This sequence belongs to the complex I 23 kDa subunit family. As to quaternary structure, NDH-1 is composed of 14 different subunits. Subunits NuoA, H, J, K, L, M, N constitute the membrane sector of the complex. [4Fe-4S] cluster serves as cofactor.

The protein resides in the cell membrane. It carries out the reaction a quinone + NADH + 5 H(+)(in) = a quinol + NAD(+) + 4 H(+)(out). Functionally, NDH-1 shuttles electrons from NADH, via FMN and iron-sulfur (Fe-S) centers, to quinones in the respiratory chain. The immediate electron acceptor for the enzyme in this species is believed to be menaquinone. Couples the redox reaction to proton translocation (for every two electrons transferred, four hydrogen ions are translocated across the cytoplasmic membrane), and thus conserves the redox energy in a proton gradient. The polypeptide is NADH-quinone oxidoreductase subunit I (Mycobacterium marinum (strain ATCC BAA-535 / M)).